A 305-amino-acid chain; its full sequence is Sulfate adenylyltransferase subunit 2 (305 aa).

Belongs to the PAPS reductase family. CysD subfamily. Heterodimer composed of CysD, the smaller subunit, and CysN.

The catalysed reaction is sulfate + ATP + H(+) = adenosine 5'-phosphosulfate + diphosphate. The protein operates within sulfur metabolism; hydrogen sulfide biosynthesis; sulfite from sulfate: step 1/3. With CysN forms the ATP sulfurylase (ATPS) that catalyzes the adenylation of sulfate producing adenosine 5'-phosphosulfate (APS) and diphosphate, the first enzymatic step in sulfur assimilation pathway. APS synthesis involves the formation of a high-energy phosphoric-sulfuric acid anhydride bond driven by GTP hydrolysis by CysN coupled to ATP hydrolysis by CysD. This Pseudomonas syringae pv. tomato (strain ATCC BAA-871 / DC3000) protein is Sulfate adenylyltransferase subunit 2.